A 340-amino-acid chain; its full sequence is NADPH dehydrogenase (340 aa).

23 to 26 serves as a coordination point for FMN; sequence SPMC. A substrate-binding site is contributed by Tyr-28. FMN contacts are provided by Ala-60 and Gln-102. 164 to 167 contributes to the substrate binding site; that stretch reads HAAH. FMN-binding positions include Arg-215 and 307 to 308; that span reads GR.

It belongs to the NADH:flavin oxidoreductase/NADH oxidase family. NamA subfamily. As to quaternary structure, homotetramer. It depends on FMN as a cofactor.

It carries out the reaction A + NADPH + H(+) = AH2 + NADP(+). Its function is as follows. Catalyzes the reduction of the double bond of an array of alpha,beta-unsaturated aldehydes and ketones. It also reduces the nitro group of nitroester and nitroaromatic compounds. It could have a role in detoxification processes. The sequence is that of NADPH dehydrogenase from Geobacillus thermodenitrificans (strain NG80-2).